A 585-amino-acid chain; its full sequence is Arginine--tRNA ligase (585 aa).

Positions 131 to 141 (ANPTGPMHVGH) match the 'HIGH' region motif.

It belongs to the class-I aminoacyl-tRNA synthetase family. In terms of assembly, monomer.

Its subcellular location is the cytoplasm. It carries out the reaction tRNA(Arg) + L-arginine + ATP = L-arginyl-tRNA(Arg) + AMP + diphosphate. In Brucella suis (strain ATCC 23445 / NCTC 10510), this protein is Arginine--tRNA ligase.